A 526-amino-acid chain; its full sequence is D-arabinono-1,4-lactone oxidase (526 aa).

The FAD-binding PCMH-type domain occupies 22 to 196 (FWSRPSLYFQ…VYATLRTVPA (175 aa)). His-59 carries the pros-8alpha-FAD histidine modification.

This sequence belongs to the oxygen-dependent FAD-linked oxidoreductase family. It depends on FAD as a cofactor.

The protein resides in the mitochondrion membrane. The enzyme catalyses D-arabinono-1,4-lactone + O2 = dehydro-D-arabinono-1,4-lactone + H2O2 + H(+). Its pathway is cofactor biosynthesis; D-erythroascorbate biosynthesis; dehydro-D-arabinono-1,4-lactone from D-arabinose: step 2/2. This is D-arabinono-1,4-lactone oxidase (ALO1) from Yarrowia lipolytica (strain CLIB 122 / E 150) (Yeast).